We begin with the raw amino-acid sequence, 356 residues long: MDFITIDLKERSYPIYFAYDSFDKLGEIVKKHVRSSKTFIITDFNVYPLYFEKLNESLKKSRFDVSYEVIPAGETSKTMEMAQRLLEKAYDSGLLRDSSVIALGGGVVGDIAGFVAATYMRGIDFVQIPTTLLAQVDSSVGGKVAVNLKKGKNIVGAFHQPKMVYIDAAVLNTLDKREILGGLAEIIKYGIIWDFDLFEYIENNLHEILDLKEDKLKHIVKKSCEIKGKIVSLDEKEENLRSILNFGHTIGHAIEALTGYEWYIHGEAVAIGMVYACKLALNLGYIDEKYFERIFSLIQRTGLPTDYEDLHKEDIIKAIKLDKKNRSSKINFVLPCGFGKVEVISVREEEILKVLK.

Residues 106–110 (GVVGD), 130–131 (TT), Lys-143, and Lys-152 each bind NAD(+). The Zn(2+) site is built by Glu-185, His-248, and His-265.

Belongs to the sugar phosphate cyclases superfamily. Dehydroquinate synthase family. Requires Co(2+) as cofactor. It depends on Zn(2+) as a cofactor. NAD(+) is required as a cofactor.

The protein resides in the cytoplasm. The catalysed reaction is 7-phospho-2-dehydro-3-deoxy-D-arabino-heptonate = 3-dehydroquinate + phosphate. Its pathway is metabolic intermediate biosynthesis; chorismate biosynthesis; chorismate from D-erythrose 4-phosphate and phosphoenolpyruvate: step 2/7. Functionally, catalyzes the conversion of 3-deoxy-D-arabino-heptulosonate 7-phosphate (DAHP) to dehydroquinate (DHQ). This chain is 3-dehydroquinate synthase, found in Thermoanaerobacter sp. (strain X514).